The following is a 197-amino-acid chain: 3-isopropylmalate dehydratase small subunit (197 aa).

This sequence belongs to the LeuD family. LeuD type 1 subfamily. Heterodimer of LeuC and LeuD.

The enzyme catalyses (2R,3S)-3-isopropylmalate = (2S)-2-isopropylmalate. Its pathway is amino-acid biosynthesis; L-leucine biosynthesis; L-leucine from 3-methyl-2-oxobutanoate: step 2/4. Functionally, catalyzes the isomerization between 2-isopropylmalate and 3-isopropylmalate, via the formation of 2-isopropylmaleate. The chain is 3-isopropylmalate dehydratase small subunit from Corynebacterium glutamicum (strain R).